A 184-amino-acid polypeptide reads, in one-letter code: Probable DNA-directed RNA polymerase subunit delta (184 aa).

Residues 14-82 form the HTH HARE-type domain; sequence KSFIDMAHTL…GENNWGLRDW (69 aa). The disordered stretch occupies residues 114–184; that stretch reads LLGEEEEEID…FNDDPDDDKI (71 aa). Over residues 117–184 the composition is skewed to acidic residues; sequence EEEEEIDDQE…FNDDPDDDKI (68 aa).

This sequence belongs to the RpoE family. RNAP is composed of a core of 2 alpha, a beta and a beta' subunits. The core is associated with a delta subunit and one of several sigma factors.

Functionally, participates in both the initiation and recycling phases of transcription. In the presence of the delta subunit, RNAP displays an increased specificity of transcription, a decreased affinity for nucleic acids, and an increased efficiency of RNA synthesis because of enhanced recycling. This chain is Probable DNA-directed RNA polymerase subunit delta, found in Staphylococcus carnosus (strain TM300).